A 1119-amino-acid polypeptide reads, in one-letter code: Nuclear matrix constituent protein 1 (1119 aa).

2 coiled-coil regions span residues 140 to 226 (LAEL…LYQQ) and 328 to 488 (LQNR…LDER). Disordered regions lie at residues 846-884 (LDVEDSQQSDVRAGNRKPGKRAKGRVRRKRSAKEVAEEA), 903-974 (LASA…PTGR), 989-1015 (NGALSDPNKGKEKEIDDGGGIGEEIPD), and 1046-1109 (GINA…EVSM). Basic residues-rich tracts occupy residues 859-876 (GNRKPGKRAKGRVRRKRS) and 920-929 (KRTRNSRKRN). A compositionally biased stretch (polar residues) spans 1075–1085 (TPEQSRGYQNQ).

The protein belongs to the CRWN family.

Its subcellular location is the nucleus matrix. The protein resides in the nucleus lamina. Functionally, architectural component of nuclear structure that plays different roles in controlling nuclear size and morphology. This Daucus carota subsp. sativus (Carrot) protein is Nuclear matrix constituent protein 1.